The sequence spans 148 residues: Receptor activity-modifying protein 1 (148 aa).

A signal peptide spans 1–26; the sequence is MAPGLRGLPRCGLWLLLAHHLFMVTA. Cystine bridges form between Cys-27/Cys-82, Cys-40/Cys-72, and Cys-57/Cys-104. Topologically, residues 27-118 are extracellular; that stretch reads CRDPDYGTLI…RALRDPPNSI (92 aa). The chain crosses the membrane as a helical span at residues 119–140; that stretch reads LCPFIALPITVTLLMTALVVWR. Topologically, residues 141 to 148 are cytoplasmic; it reads SKRTEGIV.

It belongs to the RAMP family. Heterodimer of CALCRL and RAMP1; the interaction induces allosteric modulation of CALCRL function and CGRP1/CALCA and CGRP2/CALCB ligand specificity. Heterodimer of CALCR and RAMP1; interaction forms the AMYR1 receptor complex for amylin/IAPP and CGRP1/CALCA ligands. Expressed predominantly in the thymus, skeletal muscle, embryonic and adult brain, embryonic and adult lung, and colon.

It localises to the cell membrane. Its function is as follows. Accessory protein that interacts with and modulates the function of G-protein coupled receptors including calcitonin gene-related peptide type 1 receptor (CALCRL) and calcitonin receptor (CALCR). Required for the transport of CALCRL to the plasma membrane. Together with CALCRL, form the receptor complex for the calcitonin gene-related peptides CGRP1/CALCA and CGRP2/CALCB. Together with CALCR, form the AMYR1 receptor complex for amylin/IAPP and CGRP1/CALCA. This Mus musculus (Mouse) protein is Receptor activity-modifying protein 1.